The chain runs to 501 residues: Cytochrome P450 2S1 (501 aa).

A heme-binding site is contributed by C441.

This sequence belongs to the cytochrome P450 family. Requires heme as cofactor.

The protein localises to the endoplasmic reticulum membrane. The protein resides in the microsome membrane. The catalysed reaction is all-trans-retinoate + reduced [NADPH--hemoprotein reductase] + O2 = all-trans-5,6-epoxyretinoate + oxidized [NADPH--hemoprotein reductase] + H2O + H(+). The enzyme catalyses all-trans-retinoate + reduced [NADPH--hemoprotein reductase] + O2 = all-trans-4-hydroxyretinoate + oxidized [NADPH--hemoprotein reductase] + H2O + H(+). It catalyses the reaction (5S)-hydroperoxy-(6E,8Z,11Z,14Z)-eicosatetraenoate = 5-oxo-(6E,8Z,11Z,14Z)-eicosatetraenoate + H2O. It carries out the reaction (12S)-hydroperoxy-(5Z,8Z,10E,14Z)-eicosatetraenoate = 12-oxo-(5Z,8Z,10E,14Z)-eicosatetraenoate + H2O. The catalysed reaction is (15S)-hydroperoxy-(5Z,8Z,11Z,13E)-eicosatetraenoate = 15-oxo-(5Z,8Z,11Z,13E)-eicosatetraenoate + H2O. The enzyme catalyses prostaglandin H2 = thromboxane A2. It catalyses the reaction prostaglandin H2 = (12S)-hydroxy-(5Z,8E,10E)-heptadecatrienoate + malonaldehyde. It carries out the reaction (13S)-hydroperoxy-(9Z,11E)-octadecadienoate = 13-oxo-(9Z,11E)-octadecadienoate + H2O. It functions in the pathway lipid metabolism; fatty acid metabolism. A cytochrome P450 monooxygenase involved in the metabolism of retinoids and eicosanoids. In epidermis, may contribute to the oxidative metabolism of all-trans-retinoic acid. For this activity, uses molecular oxygen inserting one oxygen atom into a substrate, and reducing the second into a water molecule, with two electrons provided by NADPH via cytochrome P450 reductase (NADPH--hemoprotein reductase). Additionally, displays peroxidase and isomerase activities toward various oxygenated eicosanoids such as prostaglandin H2 (PGH2) and hydroperoxyeicosatetraenoates (HPETEs). Independently of cytochrome P450 reductase, NADPH, and O2, catalyzes the breakdown of PGH2 to hydroxyheptadecatrienoic acid (HHT) and malondialdehyde (MDA), which is known to act as a mediator of DNA damage. The chain is Cytochrome P450 2S1 (Cyp2s1) from Mus musculus (Mouse).